The following is a 303-amino-acid chain: Bifunctional protein FolD (303 aa).

NADP(+)-binding positions include 168-170 (GRS), T197, and V238.

This sequence belongs to the tetrahydrofolate dehydrogenase/cyclohydrolase family. Homodimer.

It carries out the reaction (6R)-5,10-methylene-5,6,7,8-tetrahydrofolate + NADP(+) = (6R)-5,10-methenyltetrahydrofolate + NADPH. It catalyses the reaction (6R)-5,10-methenyltetrahydrofolate + H2O = (6R)-10-formyltetrahydrofolate + H(+). The protein operates within one-carbon metabolism; tetrahydrofolate interconversion. Its function is as follows. Catalyzes the oxidation of 5,10-methylenetetrahydrofolate to 5,10-methenyltetrahydrofolate and then the hydrolysis of 5,10-methenyltetrahydrofolate to 10-formyltetrahydrofolate. This chain is Bifunctional protein FolD, found in Desulfosudis oleivorans (strain DSM 6200 / JCM 39069 / Hxd3) (Desulfococcus oleovorans).